A 119-amino-acid chain; its full sequence is Large ribosomal subunit protein bL20 (119 aa).

It belongs to the bacterial ribosomal protein bL20 family.

Functionally, binds directly to 23S ribosomal RNA and is necessary for the in vitro assembly process of the 50S ribosomal subunit. It is not involved in the protein synthesizing functions of that subunit. This chain is Large ribosomal subunit protein bL20, found in Nitrobacter winogradskyi (strain ATCC 25391 / DSM 10237 / CIP 104748 / NCIMB 11846 / Nb-255).